The sequence spans 200 residues: Recombination protein RecR (200 aa).

The segment at 59–74 (CDICGNVCESSPCPVC) adopts a C4-type zinc-finger fold. One can recognise a Toprim domain in the interval 82-177 (SVICVVEEPK…KVTRLASGLP (96 aa)).

The protein belongs to the RecR family.

In terms of biological role, may play a role in DNA repair. It seems to be involved in an RecBC-independent recombinational process of DNA repair. It may act with RecF and RecO. This Bifidobacterium longum subsp. infantis (strain ATCC 15697 / DSM 20088 / JCM 1222 / NCTC 11817 / S12) protein is Recombination protein RecR.